Reading from the N-terminus, the 340-residue chain is 7,8-didemethyl-8-hydroxy-5-deazariboflavin synthase (340 aa).

The 232-residue stretch at 25–256 (ATYSPAYTIV…SDITIQIPPN (232 aa)) folds into the Radical SAM core domain. [4Fe-4S] cluster-binding residues include Cys39, Cys43, and Cys46.

It belongs to the radical SAM superfamily. CofG family. As to quaternary structure, consists of two subunits, CofG and CofH. [4Fe-4S] cluster serves as cofactor.

It catalyses the reaction 5-amino-5-(4-hydroxybenzyl)-6-(D-ribitylimino)-5,6-dihydrouracil + S-adenosyl-L-methionine = 7,8-didemethyl-8-hydroxy-5-deazariboflavin + 5'-deoxyadenosine + L-methionine + NH4(+) + H(+). The protein operates within cofactor biosynthesis; coenzyme F0 biosynthesis. In terms of biological role, catalyzes the radical-mediated synthesis of 7,8-didemethyl-8-hydroxy-5-deazariboflavin from 5-amino-5-(4-hydroxybenzyl)-6-(D-ribitylimino)-5,6-dihydrouracil. In Trichormus variabilis (strain ATCC 29413 / PCC 7937) (Anabaena variabilis), this protein is 7,8-didemethyl-8-hydroxy-5-deazariboflavin synthase.